A 356-amino-acid polypeptide reads, in one-letter code: uncharacterized protein (356 aa).

Residues 8–28 traverse the membrane as a helical segment; it reads ILGFVLFVLGAAIFLTEVMHS.

It to C.elegans C41C4.1 and C18B2.1.

It is found in the membrane. This is an uncharacterized protein from Caenorhabditis elegans.